A 557-amino-acid chain; its full sequence is Dihydroxy-acid dehydratase (557 aa).

Asp-78 is a Mg(2+) binding site. Cys-119 lines the [2Fe-2S] cluster pocket. Residues Asp-120 and Lys-121 each coordinate Mg(2+). Lys-121 bears the N6-carboxylysine mark. Residue Cys-192 participates in [2Fe-2S] cluster binding. Residue Glu-442 participates in Mg(2+) binding. Catalysis depends on Ser-468, which acts as the Proton acceptor.

This sequence belongs to the IlvD/Edd family. In terms of assembly, homodimer. The cofactor is [2Fe-2S] cluster. Mg(2+) serves as cofactor.

The catalysed reaction is (2R)-2,3-dihydroxy-3-methylbutanoate = 3-methyl-2-oxobutanoate + H2O. It carries out the reaction (2R,3R)-2,3-dihydroxy-3-methylpentanoate = (S)-3-methyl-2-oxopentanoate + H2O. Its pathway is amino-acid biosynthesis; L-isoleucine biosynthesis; L-isoleucine from 2-oxobutanoate: step 3/4. It functions in the pathway amino-acid biosynthesis; L-valine biosynthesis; L-valine from pyruvate: step 3/4. In terms of biological role, functions in the biosynthesis of branched-chain amino acids. Catalyzes the dehydration of (2R,3R)-2,3-dihydroxy-3-methylpentanoate (2,3-dihydroxy-3-methylvalerate) into 2-oxo-3-methylpentanoate (2-oxo-3-methylvalerate) and of (2R)-2,3-dihydroxy-3-methylbutanoate (2,3-dihydroxyisovalerate) into 2-oxo-3-methylbutanoate (2-oxoisovalerate), the penultimate precursor to L-isoleucine and L-valine, respectively. The chain is Dihydroxy-acid dehydratase from Bacillus cytotoxicus (strain DSM 22905 / CIP 110041 / 391-98 / NVH 391-98).